Consider the following 643-residue polypeptide: Phosphomethylpyrimidine synthase (643 aa).

Residues Asn248, Met277, Tyr306, His342, Ser362–Gly364, Asp403–Arg406, and Glu442 each bind substrate. His446 provides a ligand contact to Zn(2+). Tyr469 contacts substrate. His510 contacts Zn(2+). [4Fe-4S] cluster-binding residues include Cys590, Cys593, and Cys598.

It belongs to the ThiC family. As to quaternary structure, homodimer. Requires [4Fe-4S] cluster as cofactor.

The enzyme catalyses 5-amino-1-(5-phospho-beta-D-ribosyl)imidazole + S-adenosyl-L-methionine = 4-amino-2-methyl-5-(phosphooxymethyl)pyrimidine + CO + 5'-deoxyadenosine + formate + L-methionine + 3 H(+). Its pathway is cofactor biosynthesis; thiamine diphosphate biosynthesis. In terms of biological role, catalyzes the synthesis of the hydroxymethylpyrimidine phosphate (HMP-P) moiety of thiamine from aminoimidazole ribotide (AIR) in a radical S-adenosyl-L-methionine (SAM)-dependent reaction. This Burkholderia multivorans (strain ATCC 17616 / 249) protein is Phosphomethylpyrimidine synthase.